A 462-amino-acid polypeptide reads, in one-letter code: Adenosylhomocysteinase (462 aa).

T55, D128, and E188 together coordinate substrate. 189–191 (TTT) is an NAD(+) binding site. Residues K218 and D222 each contribute to the substrate site. Residues N223, 252–257 (GYGDVG), E275, N310, 331–333 (IGH), and N376 contribute to the NAD(+) site.

This sequence belongs to the adenosylhomocysteinase family. NAD(+) is required as a cofactor.

It localises to the cytoplasm. It carries out the reaction S-adenosyl-L-homocysteine + H2O = L-homocysteine + adenosine. It participates in amino-acid biosynthesis; L-homocysteine biosynthesis; L-homocysteine from S-adenosyl-L-homocysteine: step 1/1. Its function is as follows. May play a key role in the regulation of the intracellular concentration of adenosylhomocysteine. In Roseobacter denitrificans (strain ATCC 33942 / OCh 114) (Erythrobacter sp. (strain OCh 114)), this protein is Adenosylhomocysteinase.